We begin with the raw amino-acid sequence, 476 residues long: Doublesex- and mab-3-related transcription factor 3 (476 aa).

Positions 29-76 (CARCRNHGVLSWLKGHKRYCRFKDCTCEKCILIIERQRVMAAQVALRR) form a DNA-binding region, DM. Disordered regions lie at residues 89–130 (DSLR…RPTA) and 147–195 (GTLP…SKNC). Over residues 102 to 121 (DAAATAATASQSSPASQASQ) the composition is skewed to low complexity. Residues 165-174 (DSSSTDNTAE) are compositionally biased toward polar residues. The span at 176–185 (FSDKDTDQRS) shows a compositional bias: basic and acidic residues. Residues 255–290 (RPPLEVLKKIFPNQKPTVLELILKGCGGDLVSAVEV) enclose the DMA domain. Polar residues predominate over residues 418-432 (NSTSVFRSSPVLSSR). The disordered stretch occupies residues 418-476 (NSTSVFRSSPVLSSRTTEDPRISIPDDGCPIVTKQSIYTEDDYDERSDSSDSRILNTSS).

Belongs to the DMRT family. As to expression, expressed in the ventral spinal cord, in a restrical population of neurons migrating ventrically in the developing spinal cord at 11.5 dpc.

It is found in the nucleus. Functionally, probable transcription factor that plays a role in configuring the spinal circuits controlling stride in vertebrates. Involved in neuronal specification within specific subdivision of spinal cord neurons and in the development of a coordinated locomotor network controlling limb movements. May regulate transcription during sexual development. This is Doublesex- and mab-3-related transcription factor 3 (Dmrt3) from Mus musculus (Mouse).